Reading from the N-terminus, the 411-residue chain is Glutamate dehydrogenase 1, mitochondrial (411 aa).

Residues M1–L18 constitute a mitochondrion transit peptide. K102 is an active-site residue.

The protein belongs to the Glu/Leu/Phe/Val dehydrogenases family.

It is found in the mitochondrion. It carries out the reaction L-glutamate + NAD(+) + H2O = 2-oxoglutarate + NH4(+) + NADH + H(+). The enzyme catalyses L-glutamate + NADP(+) + H2O = 2-oxoglutarate + NH4(+) + NADPH + H(+). This chain is Glutamate dehydrogenase 1, mitochondrial (GDH1), found in Oryza sativa subsp. indica (Rice).